A 278-amino-acid chain; its full sequence is Protein FixR (278 aa).

Residue 40 to 64 (LLTGASRGIGHATAKLFSEAGWRII) coordinates NAD(+). Ser175 is a substrate binding site. The active-site Proton acceptor is the Tyr189.

The protein belongs to the short-chain dehydrogenases/reductases (SDR) family.

The sequence is that of Protein FixR (fixR) from Bradyrhizobium diazoefficiens (strain JCM 10833 / BCRC 13528 / IAM 13628 / NBRC 14792 / USDA 110).